Reading from the N-terminus, the 252-residue chain is Triosephosphate isomerase (252 aa).

10–12 (NWK) provides a ligand contact to substrate. The active-site Electrophile is the His96. Glu168 acts as the Proton acceptor in catalysis. Substrate-binding positions include Gly174, Ser214, and 235–236 (GG).

It belongs to the triosephosphate isomerase family. As to quaternary structure, homodimer.

The protein resides in the cytoplasm. The catalysed reaction is D-glyceraldehyde 3-phosphate = dihydroxyacetone phosphate. It functions in the pathway carbohydrate biosynthesis; gluconeogenesis. Its pathway is carbohydrate degradation; glycolysis; D-glyceraldehyde 3-phosphate from glycerone phosphate: step 1/1. Its function is as follows. Involved in the gluconeogenesis. Catalyzes stereospecifically the conversion of dihydroxyacetone phosphate (DHAP) to D-glyceraldehyde-3-phosphate (G3P). The chain is Triosephosphate isomerase from Lactobacillus helveticus (strain DPC 4571).